A 380-amino-acid chain; its full sequence is Succinyl-diaminopimelate desuccinylase (380 aa).

Histidine 69 contributes to the Zn(2+) binding site. The active site involves aspartate 71. Aspartate 102 is a Zn(2+) binding site. Catalysis depends on glutamate 135, which acts as the Proton acceptor. Zn(2+) contacts are provided by glutamate 136, glutamate 164, and histidine 353.

It belongs to the peptidase M20A family. DapE subfamily. As to quaternary structure, homodimer. The cofactor is Zn(2+). Co(2+) is required as a cofactor.

The enzyme catalyses N-succinyl-(2S,6S)-2,6-diaminopimelate + H2O = (2S,6S)-2,6-diaminopimelate + succinate. Its pathway is amino-acid biosynthesis; L-lysine biosynthesis via DAP pathway; LL-2,6-diaminopimelate from (S)-tetrahydrodipicolinate (succinylase route): step 3/3. In terms of biological role, catalyzes the hydrolysis of N-succinyl-L,L-diaminopimelic acid (SDAP), forming succinate and LL-2,6-diaminopimelate (DAP), an intermediate involved in the bacterial biosynthesis of lysine and meso-diaminopimelic acid, an essential component of bacterial cell walls. In Ruegeria pomeroyi (strain ATCC 700808 / DSM 15171 / DSS-3) (Silicibacter pomeroyi), this protein is Succinyl-diaminopimelate desuccinylase.